The following is a 494-amino-acid chain: Alpha-amylase-related protein (494 aa).

Residues methionine 1–alanine 20 form the signal peptide. Pyrrolidone carboxylic acid is present on glutamine 21. Cysteine 48 and cysteine 104 form a disulfide bridge. Ca(2+) is bound by residues asparagine 118, glutamine 169, and aspartate 178. Cysteine 157 and cysteine 171 form a disulfide bridge. Position 206 (arginine 206) interacts with chloride. The active-site Nucleophile is the aspartate 208. Histidine 212 is a Ca(2+) binding site. Glutamate 245 (proton donor) is an active-site residue. Chloride is bound by residues asparagine 308 and arginine 343. Intrachain disulfides connect cysteine 376–cysteine 382, cysteine 418–cysteine 441, and cysteine 448–cysteine 460.

Belongs to the glycosyl hydrolase 13 family. As to quaternary structure, monomer. It depends on Ca(2+) as a cofactor. The cofactor is chloride.

It localises to the secreted. It carries out the reaction Endohydrolysis of (1-&gt;4)-alpha-D-glucosidic linkages in polysaccharides containing three or more (1-&gt;4)-alpha-linked D-glucose units.. In Drosophila ercepeae (Fruit fly), this protein is Alpha-amylase-related protein (Amyrel).